We begin with the raw amino-acid sequence, 76 residues long: Small ribosomal subunit protein bS18 (76 aa).

Belongs to the bacterial ribosomal protein bS18 family. In terms of assembly, part of the 30S ribosomal subunit. Forms a tight heterodimer with protein bS6.

In terms of biological role, binds as a heterodimer with protein bS6 to the central domain of the 16S rRNA, where it helps stabilize the platform of the 30S subunit. This is Small ribosomal subunit protein bS18 from Aeromonas hydrophila subsp. hydrophila (strain ATCC 7966 / DSM 30187 / BCRC 13018 / CCUG 14551 / JCM 1027 / KCTC 2358 / NCIMB 9240 / NCTC 8049).